The sequence spans 140 residues: L-fucose mutarotase (140 aa).

His-22 functions as the Proton donor in the catalytic mechanism. Substrate-binding positions include Asp-30, Arg-107, and 129 to 131 (YGN).

The protein belongs to the RbsD / FucU family. FucU mutarotase subfamily. In terms of assembly, homodecamer.

The protein localises to the cytoplasm. It catalyses the reaction alpha-L-fucose = beta-L-fucose. Its pathway is carbohydrate metabolism; L-fucose metabolism. Its function is as follows. Involved in the anomeric conversion of L-fucose. The sequence is that of L-fucose mutarotase from Salmonella arizonae (strain ATCC BAA-731 / CDC346-86 / RSK2980).